A 267-amino-acid polypeptide reads, in one-letter code: Putative B3 domain-containing protein LOC_Os07g12820 (267 aa).

Residues 4-99 (PTFSMVKIKT…RLNVIIFNKE (96 aa)) constitute a DNA-binding region (TF-B3).

It localises to the nucleus. The chain is Putative B3 domain-containing protein LOC_Os07g12820 from Oryza sativa subsp. japonica (Rice).